A 460-amino-acid chain; its full sequence is MSSTKLEDSLPRRNWSSASELNETQEPFLNPTDYDDEEFLRYLWREYLHPKEYEWVLIAGYIIVFVVALIGNVLVCVAVWKNHHMRTVTNYFIVNLSLADVLVTITCLPATLVVDITETWFFGQSLCKVIPYLQTVSVSVSVLTLSCIALDRWYAICHPLMFKSTAKRARNSIVVIWIVSCIIMIPQAIVMERSSMLPGLANKTTLFTVCDERWGGEVYPKMYHICFFLVTYMAPLCLMVLAYLQIFRKLWCRQIPGTSSVVQRKWKQPQPVSQPRGSGQQSKARISAVAAEIKQIRARRKTARMLMVVLLVFAICYLPISILNVLKRVFGMFTHTEDRETVYAWFTFSHWLVYANSAANPIIYNFLSGKFREEFKAAFSCCLGVHRRQGDRLARGRTSTESRKSLTTQISNFDNVSKLSEHVALTSISTLPAANGAGPLQNWYLQQGVPSSLLSTWLEV.

Topologically, residues M1–E54 are extracellular. 2 N-linked (GlcNAc...) asparagine glycosylation sites follow: N14 and N22. Residues D33 to H49 are required for response to orexin-A. The chain crosses the membrane as a helical span at residues W55 to V75. Topologically, residues C76–V88 are cytoplasmic. Residues T89 to A110 traverse the membrane as a helical segment. The Extracellular portion of the chain corresponds to T111–C127. A disulfide bridge links C127 with C210. A helical membrane pass occupies residues K128 to L150. The Cytoplasmic portion of the chain corresponds to D151–R170. The helical transmembrane segment at N171–M191 threads the bilayer. Topologically, residues E192–M222 are extracellular. N-linked (GlcNAc...) asparagine glycosylation occurs at N202. The helical transmembrane segment at Y223–Y243 threads the bilayer. Residues L244–R304 are Cytoplasmic-facing. A helical transmembrane segment spans residues M305–L326. At K327–V342 the chain is on the extracellular side. Residues Y343–F366 traverse the membrane as a helical segment. Topologically, residues L367–V460 are cytoplasmic.

The protein belongs to the G-protein coupled receptor 1 family. Expressed in the brain in the cerebral cortex, septal nuclei, hippocampus, medial thalamic groups, dorsal and median raphe nuclei, and many hypothalamic nuclei including the tuberomammillary nucleus, dorsomedial hypothalamus, paraventricular hypothalamic nucleus, and ventral premammillary nucleus. Not detected in the spleen, lung, liver, skeletal muscle, kidney and testis. Orexin receptor mRNA expression has also been reported in the adrenal gland, enteric nervous system, and pancreas.

The protein localises to the cell membrane. Nonselective, high-affinity receptor for both orexin-A and orexin-B neuropeptides. Triggers an increase in cytoplasmic Ca(2+) levels in response to orexin-A binding. This is Orexin receptor type 2 (Hcrtr2) from Rattus norvegicus (Rat).